A 1396-amino-acid polypeptide reads, in one-letter code: ABC-type transporter cicA (1396 aa).

Residues 1 to 40 are disordered; that stretch reads MRLSSEAKIAESGGQPPTAGSRSETGSESTEAESADPKAQ. Over residues 18 to 29 the composition is skewed to low complexity; sequence TAGSRSETGSES. The next 3 membrane-spanning stretches (helical) occupy residues 142-162, 191-211, and 300-320; these read FLLGGFCHLISSLLIVFAPYL, GFVVGITVMQAIQSLCTNQFL, and MFHISWTAPVSIIVALILLLV. One can recognise an ABC transmembrane type-1 1 domain in the interval 143 to 466; the sequence is LLGGFCHLIS…LPLVLGQITD (324 aa). Asn321 carries an N-linked (GlcNAc...) asparagine glycan. 3 helical membrane-spanning segments follow: residues 324–344, 409–429, and 440–460; these read YSALAGFGLLVIGMPFLTYAV, ILCVSMAIPVFASMLSFITYA, and IFSSLALFNSLRMPLNLLPLV. Basic and acidic residues predominate over residues 510–533; it reads AADKEAEKVEKKANPRRTEPKSEA. The disordered stretch occupies residues 510-543; sequence AADKEAEKVEKKANPRRTEPKSEAPTDSAESDEP. Residues 525–751 enclose the ABC transporter 1 domain; that stretch reads RRTEPKSEAP…NDLFKQLMST (227 aa). 563–570 provides a ligand contact to ATP; sequence GTVGSGKS. Residue Asn604 is glycosylated (N-linked (GlcNAc...) asparagine). The disordered stretch occupies residues 751–787; sequence TASQDSKEDEEEATEVVEEEAEKQAQQEPTKPAAALM. Residues 757–771 are compositionally biased toward acidic residues; it reads KEDEEEATEVVEEEA. 2 helical membrane-spanning segments follow: residues 816 to 836 and 852 to 872; these read LAILFLLAFANVVNVWTNLWL and YIGIYAGLGAGSALTMFIFST. An ABC transmembrane type-1 2 domain is found at 816 to 1093; it reads LAILFLLAFA…TVRQLAEVEN (278 aa). Residue Asn880 is glycosylated (N-linked (GlcNAc...) asparagine). 4 consecutive transmembrane segments (helical) span residues 930–947, 951–970, 1036–1056, and 1065–1085; these read MYAITITMIVSIMILIIV, YFAIALVPLFLLFLTASNYY, LSVRLDAVAVLLVFVTGVLVV, and SISGLVLSYILAIAQMLQFTV. N-linked (GlcNAc...) asparagine glycosylation is found at Asn1096, Asn1150, and Asn1154. Residues 1131–1380 form the ABC transporter 2 domain; sequence ITFDNVAMRY…EDGIFRAMCE (250 aa). 1165 to 1172 is a binding site for ATP; it reads GRTGAGKS.

Belongs to the ABC transporter superfamily. ABCC family. Conjugate transporter (TC 3.A.1.208) subfamily.

It is found in the cell membrane. Its function is as follows. ABC-type transporter; part of the gene cluster that mediates the biosynthesis of cichorine, a phytotoxin active against knapweed, corn, and soybeans. CicA is probably involved in the secretion of cichorine. The chain is ABC-type transporter cicA from Emericella nidulans (strain FGSC A4 / ATCC 38163 / CBS 112.46 / NRRL 194 / M139) (Aspergillus nidulans).